We begin with the raw amino-acid sequence, 450 residues long: MTVNAKTSPSAGNTWRDLPAAQQPEYPDTEALRAVIADLESYPPLVFAGECDQLRARMAAVAKGEAFLLQGGDCAEAFDAVSADHIRNKLKTLLQMGAVLTYAASVPVVKVGRIAGQYSKPRSKPTETRDGVTLPTYRGDSVNGFDFTEAARIPDPERLKRMYHASASTLNLVRAFTTGGYADLRQVHAWNQDFVKSSPSGQRYEQLAREIDNALNFMRACGTDPAEFQTVEFFSSHEALLLDYESALTRVDSRTGQLYDVSGHMVWIGERTRQLDHAHIEFASRIRNPIGIKLGPSTTAEEALQYIERLDPEREPGRLTFIVRMGADKIRDKLPELVEKVTASGATVAWITDPMHGNTYEAASGHKTRRFDDVLDEVKGFFEVHKSLGTHPGGIHVELTGDDVTECVGGGDEIFVDDLHQRYETACDPRLNRSQSLDLAFLVAEMYRDQ.

The span at 1–13 (MTVNAKTSPSAGN) shows a compositional bias: polar residues. The segment at 1–20 (MTVNAKTSPSAGNTWRDLPA) is disordered.

Belongs to the class-II DAHP synthase family. In terms of assembly, homodimer.

The catalysed reaction is D-erythrose 4-phosphate + phosphoenolpyruvate + H2O = 7-phospho-2-dehydro-3-deoxy-D-arabino-heptonate + phosphate. Its pathway is metabolic intermediate biosynthesis; chorismate biosynthesis; chorismate from D-erythrose 4-phosphate and phosphoenolpyruvate: step 1/7. The polypeptide is Phospho-2-dehydro-3-deoxyheptonate aldolase (aroH) (Streptomyces coelicolor (strain ATCC BAA-471 / A3(2) / M145)).